A 372-amino-acid chain; its full sequence is Ca(2+)/H(+) antiporter (372 aa).

11 consecutive transmembrane segments (helical) span residues 7–27 (IFLV…LGWG), 29–49 (TTVF…MGTA), 62–82 (GGLL…YIAL), 94–114 (LTGS…FLGG), 134–154 (MNLG…STGV), 162–182 (LSVA…VFSM), 222–242 (LWTG…ELLV), 251–271 (SLGL…GNAA), 294–314 (GSSL…GWAI), 320–340 (LNFN…VNSI), and 352–372 (ILLL…PTLV).

Belongs to the Ca(2+):cation antiporter (CaCA) (TC 2.A.19) family. Cation/proton exchanger (CAX) subfamily.

The protein resides in the cell inner membrane. Its function is as follows. Ca(+)/H(+) antiporter that extrudes calcium in exchange for external protons. Plays an important role in salt tolerance. Does not transport sodium or lithium. The sequence is that of Ca(2+)/H(+) antiporter from Synechocystis sp. (strain ATCC 27184 / PCC 6803 / Kazusa).